Consider the following 96-residue polypeptide: Co-chaperonin GroES (96 aa).

Belongs to the GroES chaperonin family. As to quaternary structure, heptamer of 7 subunits arranged in a ring. Interacts with the chaperonin GroEL.

The protein localises to the cytoplasm. Functionally, together with the chaperonin GroEL, plays an essential role in assisting protein folding. The GroEL-GroES system forms a nano-cage that allows encapsulation of the non-native substrate proteins and provides a physical environment optimized to promote and accelerate protein folding. GroES binds to the apical surface of the GroEL ring, thereby capping the opening of the GroEL channel. The chain is Co-chaperonin GroES from Methylibium petroleiphilum (strain ATCC BAA-1232 / LMG 22953 / PM1).